A 417-amino-acid chain; its full sequence is Phosphoglycerate kinase 1 (417 aa).

Position 2 is an N-acetylserine (S2). S2 and S4 each carry phosphoserine. Position 6 is an N6-succinyllysine (K6). K11 carries the post-translational modification N6-acetyllysine. 6 residues coordinate (2R)-3-phosphoglycerate: V23, D24, F25, N26, Q38, and R39. Residues Q38–A43 are mitochondrial targeting region exposed following cis-trans isomerization by PIN1 and recognized by the TOM complex for mitochondrial translocation of the protein. N6-acetyllysine; alternate is present on K48. The residue at position 48 (K48) is an N6-succinyllysine; alternate. The (2R)-3-phosphoglycerate site is built by S62, H63, G65, and R66. An N6-acetyllysine modification is found at K75. At Y76 the chain carries Phosphotyrosine. N6-acetyllysine occurs at positions 86 and 91. An N6-acetyllysine; alternate modification is found at K97. An N6-(2-hydroxyisobutyryl)lysine; alternate modification is found at K97. (2R)-3-phosphoglycerate is bound by residues L122 and R123. K131 is subject to N6-acetyllysine; alternate. N6-malonyllysine; alternate is present on K131. N6-acetyllysine is present on K146. (2R)-3-phosphoglycerate is bound by residues H170 and R171. The residue at position 191 (K191) is an N6-succinyllysine. At Y196 the chain carries Phosphotyrosine. N6-acetyllysine is present on K199. At S203 the chain carries Phosphoserine. G214 is a binding site for ADP. A CDP-binding site is contributed by G214. AMP contacts are provided by A215 and K216. Residue A215 coordinates ATP. Mg(2+) is bound at residue A215. N6-(2-hydroxyisobutyryl)lysine is present on K216. Residues A218 and D219 each coordinate Mg(2+). D219 is a CDP binding site. K220 contributes to the AMP binding site. K220 provides a ligand contact to ATP. K220 is modified (N6-(2-hydroxyisobutyryl)lysine). G238 is an ADP binding site. G238 serves as a coordination point for CDP. G239 is a binding site for AMP. ATP is bound at residue G239. K267 and K291 each carry N6-acetyllysine. G313 is a binding site for AMP. G313 provides a ligand contact to ATP. K323 is subject to N6-(2-hydroxyisobutyryl)lysine. Positions 338, 340, and 343 each coordinate CDP. F343 provides a ligand contact to ADP. E344 is an AMP binding site. ATP is bound at residue E344. At K361 the chain carries N6-acetyllysine. 2 residues coordinate ATP: D375 and T376. D375 is a Mg(2+) binding site.

This sequence belongs to the phosphoglycerate kinase family. Monomer. Interacts with kinase MAPK1/ERK2; the interaction is direct, occurs under hypoxic conditions, and promotes its interaction with PIN1. Interacts with peptidyl-prolyl cis-trans isomerase PIN1; the interaction is direct, occurs under hypoxic conditions, and targets the protein to the mitochondrion by promoting interactions with the TOM complex. Interacts with mitochondrial circRNA mcPGK1 (via its 2nd stem-loop); the interaction is direct and targets the protein to the mitochondrion by promoting interactions with the TOM complex. Interacts with pyruvate dehydrogenase kinase PDK1; the interaction is direct, occurs under hypoxic conditions and leads to PDK1-mediated inhibition of pyruvate dehydrogenase complex activity. Mg(2+) is required as a cofactor. In terms of processing, phosphorylated at Ser-203 by MAPK1/ERK2 under hypoxic conditions, which promotes its mitochondrial targeting.

It is found in the cytoplasm. The protein localises to the cytosol. Its subcellular location is the mitochondrion matrix. It catalyses the reaction (2R)-3-phosphoglycerate + ATP = (2R)-3-phospho-glyceroyl phosphate + ADP. The catalysed reaction is L-seryl-[protein] + ATP = O-phospho-L-seryl-[protein] + ADP + H(+). It participates in carbohydrate degradation; glycolysis; pyruvate from D-glyceraldehyde 3-phosphate: step 2/5. Its function is as follows. Catalyzes one of the two ATP producing reactions in the glycolytic pathway via the reversible conversion of 1,3-diphosphoglycerate to 3-phosphoglycerate. Both L- and D- forms of purine and pyrimidine nucleotides can be used as substrates, but the activity is much lower on pyrimidines. In addition to its role as a glycolytic enzyme, it seems that PGK-1 acts as a polymerase alpha cofactor protein (primer recognition protein). Acts as a protein kinase when localized to the mitochondrion where it phosphorylates pyruvate dehydrogenase kinase PDK1 to inhibit pyruvate dehydrogenase complex activity and suppress the formation of acetyl-coenzyme A from pyruvate, and consequently inhibit oxidative phosphorylation and promote glycolysis. May play a role in sperm motility. In Macaca fascicularis (Crab-eating macaque), this protein is Phosphoglycerate kinase 1 (PGK1).